Reading from the N-terminus, the 700-residue chain is Small ribosomal subunit protein uS3c (700 aa).

Insert stretches follow at residues 88–196 (NCHM…LGKF) and 282–587 (KPCT…FQTR).

This sequence belongs to the universal ribosomal protein uS3 family. In terms of assembly, part of the 30S ribosomal subunit.

It is found in the plastid. It localises to the chloroplast. The sequence is that of Small ribosomal subunit protein uS3c (rps3) from Tetradesmus obliquus (Green alga).